We begin with the raw amino-acid sequence, 118 residues long: Ribulose bisphosphate carboxylase small subunit (118 aa).

The protein belongs to the RuBisCO small chain family. In terms of assembly, heterohexadecamer of 8 large and 8 small subunits.

The protein resides in the carboxysome. Its function is as follows. RuBisCO catalyzes two reactions: the carboxylation of D-ribulose 1,5-bisphosphate, the primary event in carbon dioxide fixation, as well as the oxidative fragmentation of the pentose substrate in the photorespiration process. Both reactions occur simultaneously and in competition at the same active site. Although the small subunit is not catalytic it is essential for maximal activity. This Thermosynechococcus vestitus (strain NIES-2133 / IAM M-273 / BP-1) protein is Ribulose bisphosphate carboxylase small subunit.